The chain runs to 217 residues: tRNA (guanine-N(7)-)-methyltransferase (217 aa).

The S-adenosyl-L-methionine site is built by Glu-46, Glu-71, Asp-98, and Asp-120. Residue Asp-120 is part of the active site. Lys-124 is a substrate binding site. Residues 126-131 (RHEKRR) are interaction with RNA. Substrate-binding positions include Asp-156 and 196 to 199 (TEYE).

It belongs to the class I-like SAM-binding methyltransferase superfamily. TrmB family.

The catalysed reaction is guanosine(46) in tRNA + S-adenosyl-L-methionine = N(7)-methylguanosine(46) in tRNA + S-adenosyl-L-homocysteine. Its pathway is tRNA modification; N(7)-methylguanine-tRNA biosynthesis. Functionally, catalyzes the formation of N(7)-methylguanine at position 46 (m7G46) in tRNA. In Lactobacillus gasseri (strain ATCC 33323 / DSM 20243 / BCRC 14619 / CIP 102991 / JCM 1131 / KCTC 3163 / NCIMB 11718 / NCTC 13722 / AM63), this protein is tRNA (guanine-N(7)-)-methyltransferase.